Here is a 343-residue protein sequence, read N- to C-terminus: N-acetyl-gamma-glutamyl-phosphate reductase (343 aa).

Residue Cys-147 is part of the active site.

Belongs to the NAGSA dehydrogenase family. Type 1 subfamily.

The protein localises to the cytoplasm. The catalysed reaction is N-acetyl-L-glutamate 5-semialdehyde + phosphate + NADP(+) = N-acetyl-L-glutamyl 5-phosphate + NADPH + H(+). It functions in the pathway amino-acid biosynthesis; L-arginine biosynthesis; N(2)-acetyl-L-ornithine from L-glutamate: step 3/4. Catalyzes the NADPH-dependent reduction of N-acetyl-5-glutamyl phosphate to yield N-acetyl-L-glutamate 5-semialdehyde. The chain is N-acetyl-gamma-glutamyl-phosphate reductase from Staphylococcus aureus (strain MRSA252).